The chain runs to 376 residues: N-acetyldiaminopimelate deacetylase (376 aa).

Aspartate 69 is an active-site residue. Glutamate 128 (proton acceptor) is an active-site residue.

Belongs to the peptidase M20A family. N-acetyldiaminopimelate deacetylase subfamily.

The enzyme catalyses N-acetyl-(2S,6S)-2,6-diaminopimelate + H2O = (2S,6S)-2,6-diaminopimelate + acetate. It participates in amino-acid biosynthesis; L-lysine biosynthesis via DAP pathway; LL-2,6-diaminopimelate from (S)-tetrahydrodipicolinate (acetylase route): step 3/3. Its function is as follows. Catalyzes the conversion of N-acetyl-diaminopimelate to diaminopimelate and acetate. The sequence is that of N-acetyldiaminopimelate deacetylase from Streptococcus pneumoniae (strain CGSP14).